The chain runs to 431 residues: STE20-related kinase adapter protein alpha (431 aa).

Serine 2 and serine 46 each carry phosphoserine. A Protein kinase domain is found at 69-379; that stretch reads YELLTVIGKG…ASTLLNHSFF (311 aa). Residues 310–347 are disordered; the sequence is LTMSPSRSVANSGLSDSLTTSTPRPSNGDSPSHPYHRT. The span at 312–339 shows a compositional bias: polar residues; the sequence is MSPSRSVANSGLSDSLTTSTPRPSNGDS. A phosphothreonine; by LKB1 mark is found at threonine 329 and threonine 419.

Belongs to the protein kinase superfamily. STE Ser/Thr protein kinase family. STE20 subfamily. In terms of assembly, component of a trimeric complex composed of STK11/LKB1, STRAD (STRADA or STRADB) and CAB39/MO25 (CAB39/MO25alpha or CAB39L/MO25beta): the complex tethers STK11/LKB1 in the cytoplasm and stimulates its catalytic activity.

It localises to the nucleus. The protein localises to the cytoplasm. Functionally, pseudokinase which, in complex with CAB39/MO25 (CAB39/MO25alpha or CAB39L/MO25beta), binds to and activates STK11/LKB1. Adopts a closed conformation typical of active protein kinases and binds STK11/LKB1 as a pseudosubstrate, promoting conformational change of STK11/LKB1 in an active conformation. The polypeptide is STE20-related kinase adapter protein alpha (STRADA) (Homo sapiens (Human)).